Reading from the N-terminus, the 198-residue chain is Ribonuclease HII (198 aa).

The RNase H type-2 domain occupies 10-198 (QLVAGVDEVG…PVKRALGLAS (189 aa)). Residues aspartate 16, glutamate 17, and aspartate 108 each coordinate a divalent metal cation.

Belongs to the RNase HII family. Mn(2+) serves as cofactor. It depends on Mg(2+) as a cofactor.

It is found in the cytoplasm. The catalysed reaction is Endonucleolytic cleavage to 5'-phosphomonoester.. Endonuclease that specifically degrades the RNA of RNA-DNA hybrids. In Escherichia coli O6:H1 (strain CFT073 / ATCC 700928 / UPEC), this protein is Ribonuclease HII.